The sequence spans 77 residues: Translation initiation factor IF-1, chloroplastic (77 aa).

An S1-like domain is found at 1-71 (MKEQKWIHEG…TKGRIIYRIR (71 aa)).

Belongs to the IF-1 family. As to quaternary structure, component of the 30S ribosomal translation pre-initiation complex which assembles on the 30S ribosome in the order IF-2 and IF-3, IF-1 and N-formylmethionyl-tRNA(fMet); mRNA recruitment can occur at any time during PIC assembly.

The protein resides in the plastid. The protein localises to the chloroplast. One of the essential components for the initiation of protein synthesis. Stabilizes the binding of IF-2 and IF-3 on the 30S subunit to which N-formylmethionyl-tRNA(fMet) subsequently binds. Helps modulate mRNA selection, yielding the 30S pre-initiation complex (PIC). Upon addition of the 50S ribosomal subunit IF-1, IF-2 and IF-3 are released leaving the mature 70S translation initiation complex. The sequence is that of Translation initiation factor IF-1, chloroplastic from Vitis vinifera (Grape).